The sequence spans 1637 residues: MSNRGNLNLNLPPSSGKYTVGENVHFELSKEKNNSTNSNPHTSSTSTSNSNNTGIGVAKSLSTNDNNNDNDNQQPQQHEQIQSKAKSQSQSQSQSQSQPQTQVQVEQQQQQQSLVNSPAAQLAAKKRKKKKSKKSSNNNGNNSNTNSNSNSEITNTSISMPHAFLNNPDEDYPTSRVIKQAPNGDVIVESLDHVGGTYEDHLHDDYSDEDTLHHHLRQAPHQASNNNHIHNHSHTSSHPLQHTPNHLHHASHNANPLTQHISASGASMRSHGHNDAHSNLWDSASLEEQEKLKEFWESLEESQKLDLVKIDKQSIMKMFKNETRQHLQQLLQNGVLNNQNASSSNNCACKYCGRRNNIIEEELENIYDNHFDDIIDFIHEVRDINDLNALPGLLFGGFHMLEEERRLQKRKQLHNEHLELAKSSNLQNQAHIEEIRAQMDKLKMNQRQQSQSQSQSQSQQQRDVQTAQSQVLSKDSSLKNANTSMNKQHTSQQLLQPQIQAQGKNNLQQNHHTHHHHQQPLQHPTVQISATFLSSNPTETQLFNKLLDPKLFEALESLDLQKMKEVSHFDPQNTAHINMLEKAGSLREIVRDLHNVDRNHLEKGMSYVQNMGKLFSNIASLNPSNPEDAEKIMTGQLNEQFNQGLSTFAEDLLKNDGSSFISMMETLSELRSAREELLKEKTPYNGLLTKTPAATSQDREQQVQPNHSHWLDEDDHDHEHEHEHEHEHEHEIDDEDHEHYCCHHHQHHHLHGDEEYDEEDEEDDEEYEYGDDEEEEDEEDEEEGEDEELEEVVEDDVDEEILDDEEEFDAKNASDTESEISEEEKMQEIRRLFLIQVIKLFQERLKSAYKEKVSKDNTRKLFEELEAEEAAKREKEAKKLKQKEKAKERKRLQQLAKEEEKRKKEEEAKRIAEELHAKQEQLKLEQKKKKEEARLRREEEKKKKLEEIKRREAEHKRKVEEQIKHDEEQRRLKEERRKELEEKKRQKEEEKKQKELLKKQKEEEKERLRIEREKQLEKEAAVSKSIPQPSPKSKHVMKLAATFQSDIPSKQNQAQNGNQSHLPPQSRLRQDEENPQKTFANSVFSAKEYNSIYQPLPGSLSNNSSSAALSVGTQLSNFQALSHPQQQQQQYSNDIYLPSANLATATVQSPRSAPINLPNGTSAVGVSLANHLSLNNSSQGSPWTTNSTLSSNLGSTGLSHGQGQTVSGVNTNLPSSIGITSGGASQIFQPQPQPQLQPHQPQQQQQQQQQQQQQQQQNYFSPFNSFSEPLVGEPFQGIVHPTTNINNSTTASSSTGAIIPPMNPSGNIWNSNIGATATNAPASVSRNNSVWSNNAITPKPSEPSFLSTAGRSSSLWGTLANAPVASSSNNNSNATANYDNNNVRSLGSSSFAPANPGQHELEVIQTAIYNCFQMMQNSNQLEFNVAPLMAIFSNVRSLTNKTQLTVNQFLNCCVSNSLYQFDFVYDDFGTVTHLKVGLNGLNDHNSVNGFSKSSTTPPLLPISAMNSKILGYTQQQQQQQQPQPQPQSQQQYPLQHSHQQRLLQLFSNNQTILSQDVTSSAFATGTNTQGSSYGQVQLGAVSPAFARTSPPGLFPNDIPLLSTINELNSTPSTGTGTGTGSGVGAGTGAVFGSGIWN.

A compositionally biased stretch (polar residues) spans 1–17 (MSNRGNLNLNLPPSSGK). Disordered stretches follow at residues 1 to 155 (MSNR…EITN), 221 to 252 (HQAS…HASH), 442 to 494 (LKMN…SQQL), 504 to 523 (KNNL…PLQH), 681 to 734 (KTPY…EIDD), 746 to 825 (QHHH…EEEK), 871 to 1036 (AKRE…SKHV), 1049 to 1075 (SKQN…EENP), 1176 to 1299 (NSSQ…GAII), and 1512 to 1534 (YTQQ…QYPL). Basic and acidic residues predominate over residues 24-33 (VHFELSKEKN). Low complexity-rich tracts occupy residues 34–53 (NSTN…SNNT) and 64–113 (NDNN…QQQS). Residues 124–134 (AKKRKKKKSKK) are compositionally biased toward basic residues. A compositionally biased stretch (low complexity) spans 135–155 (SSNNNGNNSNTNSNSNSEITN). Residues 446–470 (QRQQSQSQSQSQSQQQRDVQTAQSQ) are compositionally biased toward low complexity. A compositionally biased stretch (polar residues) spans 471-487 (VLSKDSSLKNANTSMNK). Residues 692–706 (PAATSQDREQQVQPN) show a composition bias toward polar residues. Residues 717 to 734 (DHEHEHEHEHEHEHEIDD) show a composition bias toward basic and acidic residues. The span at 754 to 808 (EEYDEEDEEDDEEYEYGDDEEEEDEEDEEEGEDEELEEVVEDDVDEEILDDEEEF) shows a compositional bias: acidic residues. Residues 855–1023 (KDNTRKLFEE…KQLEKEAAVS (169 aa)) adopt a coiled-coil conformation. Basic and acidic residues-rich tracts occupy residues 871–887 (AKRE…EKAK) and 896–1021 (AKEE…KEAA). Residues 1049-1063 (SKQNQAQNGNQSHLP) show a composition bias toward polar residues. Residues 1176-1199 (NSSQGSPWTTNSTLSSNLGSTGLS) show a composition bias toward low complexity. The segment covering 1201–1228 (GQGQTVSGVNTNLPSSIGITSGGASQIF) has biased composition (polar residues). Residues 1234 to 1257 (PQLQPHQPQQQQQQQQQQQQQQQQ) are compositionally biased toward low complexity. Positions 1258–1267 (NYFSPFNSFS) are enriched in polar residues. Low complexity-rich tracts occupy residues 1282-1299 (TTNI…GAII) and 1514-1534 (QQQQ…QYPL).

Belongs to the NST1 family.

The protein localises to the cytoplasm. Its function is as follows. May act as a negative regulator of salt tolerance. The polypeptide is Stress response protein NST1 (NST1) (Lodderomyces elongisporus (strain ATCC 11503 / CBS 2605 / JCM 1781 / NBRC 1676 / NRRL YB-4239) (Yeast)).